Consider the following 457-residue polypeptide: MSPSIWEKCLKYLQNKLSPIEFSMWIRPLKAEFKKNILILYAPNEFSFNWIKDNYIENLKKLLKNFCNINTTPTLMLKICKPKIIQKKFFNELTLKKNILNSKLTYNVNTKLSNIIYSSEINTNYTFQNFTKGQSNQLAFKTIYKIAHNPGKNYFNPLFLYGKSGLGKTHLLHAVANTILKYKNTIKIIYINSENFIQNMITSLKNNTIEEFKKYYRSVNTLLIDDIQFFAYKKHSQEELFHTINALLNRNQQIIITSDQFPQKIHGIETRLKSRFECGLTIRIDPPDLNTRTKILIKKSHIYDINLSYKVAFFIAKNLKSNIRELEGALNKILANSDSKKKIITINFAYKTLQELFSLPKKSITIKNIQKVVSNYYHITIINLLSQCRLKSIVKPRQIAMAISKKLTNKSLSEIGREFNGRNHATVLYACKKIKKLQEKNNNIKKDFLTLLKILSS.

The tract at residues 1 to 71 (MSPSIWEKCL…LLKNFCNINT (71 aa)) is domain I, interacts with DnaA modulators. Residues 71–119 (TTPTLMLKICKPKIIQKKFFNELTLKKNILNSKLTYNVNTKLSNIIYSS) are domain II. The interval 120 to 337 (EINTNYTFQN…GALNKILANS (218 aa)) is domain III, AAA+ region. The ATP site is built by Gly-165, Gly-167, Lys-168, and Thr-169. The domain IV, binds dsDNA stretch occupies residues 338-457 (DSKKKIITIN…FLTLLKILSS (120 aa)).

The protein belongs to the DnaA family. In terms of assembly, oligomerizes as a right-handed, spiral filament on DNA at oriC.

The protein resides in the cytoplasm. Its function is as follows. Plays an essential role in the initiation and regulation of chromosomal replication. ATP-DnaA binds to the origin of replication (oriC) to initiate formation of the DNA replication initiation complex once per cell cycle. Binds the DnaA box (a 9 base pair repeat at the origin) and separates the double-stranded (ds)DNA. Forms a right-handed helical filament on oriC DNA; dsDNA binds to the exterior of the filament while single-stranded (ss)DNA is stabiized in the filament's interior. The ATP-DnaA-oriC complex binds and stabilizes one strand of the AT-rich DNA unwinding element (DUE), permitting loading of DNA polymerase. After initiation quickly degrades to an ADP-DnaA complex that is not apt for DNA replication. Binds acidic phospholipids. This Buchnera aphidicola subsp. Baizongia pistaciae (strain Bp) protein is Chromosomal replication initiator protein DnaA.